A 200-amino-acid polypeptide reads, in one-letter code: Small ribosomal subunit protein uS4 (200 aa).

Residues 22–43 form a disordered region; that stretch reads TGKELERRPYAPGQHGPTQRKK. The 79-residue stretch at 92–170 folds into the S4 RNA-binding domain; it reads QRLDNIVYRL…VPEYVTFDAE (79 aa).

This sequence belongs to the universal ribosomal protein uS4 family. In terms of assembly, part of the 30S ribosomal subunit. Contacts protein S5. The interaction surface between S4 and S5 is involved in control of translational fidelity.

In terms of biological role, one of the primary rRNA binding proteins, it binds directly to 16S rRNA where it nucleates assembly of the body of the 30S subunit. With S5 and S12 plays an important role in translational accuracy. This chain is Small ribosomal subunit protein uS4, found in Listeria innocua serovar 6a (strain ATCC BAA-680 / CLIP 11262).